The sequence spans 192 residues: Ribosome hibernation promotion factor (192 aa).

The interval 95–129 (RVNRKHKTHGEPEAFVAEVQEAPPENVDDVNAEPT) is disordered. Residues 120–129 (NVDDVNAEPT) are compositionally biased toward acidic residues.

It belongs to the HPF/YfiA ribosome-associated protein family. Long HPF subfamily. In terms of assembly, interacts with 100S ribosomes.

Its subcellular location is the cytoplasm. Its function is as follows. Required for dimerization of active 70S ribosomes into 100S ribosomes in stationary phase; 100S ribosomes are translationally inactive and sometimes present during exponential growth. This Staphylococcus haemolyticus (strain JCSC1435) protein is Ribosome hibernation promotion factor.